The sequence spans 3014 residues: Cadherin EGF LAG seven-pass G-type receptor 1 (3014 aa).

A signal peptide spans 1–20 (MAPPPPPVLPVLLLLAAAAA). Over 22–2469 (PAMGLRAAAW…RENGEVLPLK (2448 aa)) the chain is Extracellular. Positions 205–242 (AGTPSASPSPSPPLPPNLPEARAGPARRARRGTSGRGS) are disordered. Pro residues predominate over residues 211 to 222 (SPSPSPPLPPNL). Cadherin domains are found at residues 246–353 (PMPN…SPVF), 354–459 (EQSE…YPQF), 460–565 (SEQN…EPIF), 566–687 (VSSP…DPVF), 688–789 (TQPT…RPVF), 790–892 (QSSH…APQF), 893–999 (LWDF…APMF), 1000–1101 (EKDE…PPVL), and 1106–1224 (ILFN…SPLL). 4 N-linked (GlcNAc...) asparagine glycosylation sites follow: Asn403, Asn546, Asn634, and Asn778. N-linked (GlcNAc...) asparagine glycans are attached at residues Asn1114, Asn1139, Asn1213, Asn1249, Asn1259, and Asn1287. An EGF-like 1; calcium-binding domain is found at 1303-1361 (DDNICLREPCENYMKCVSVLRFDSSAPFLSSTTVLFRPIHPINGLRCRCPPGFTGDYCE). Intrachain disulfides connect Cys1307-Cys1318, Cys1312-Cys1349, Cys1351-Cys1360, Cys1367-Cys1378, Cys1372-Cys1387, Cys1389-Cys1398, Cys1407-Cys1418, Cys1412-Cys1428, and Cys1430-Cys1440. An EGF-like 2; calcium-binding domain is found at 1363–1399 (EIDLCYSDPCGANGRCRSREGGYTCECFEDFTGEHCE). The region spanning 1403 to 1441 (RSGRCANGVCKNGGTCVNLLIGGFHCVCPPGEYERPYCE) is the EGF-like 3; calcium-binding domain. The Laminin G-like 1 domain occupies 1442–1646 (VTTRSFPPQS…IANNGTREGC (205 aa)). N-linked (GlcNAc...) asparagine glycans are attached at residues Asn1576, Asn1623, and Asn1640. 13 disulfides stabilise this stretch: Cys1620–Cys1646, Cys1653–Cys1664, Cys1658–Cys1673, Cys1675–Cys1684, Cys1840–Cys1870, Cys1876–Cys1887, Cys1881–Cys1896, Cys1898–Cys1907, Cys1911–Cys1922, Cys1916–Cys1934, Cys1936–Cys1945, Cys1953–Cys1966, and Cys1968–Cys1978. The EGF-like 4; calcium-binding domain occupies 1649–1685 (RRNFCDGRRCQNGGTCVNRWNMYLCECPLRFGGKNCE). Asn1666 is modified ((3R)-3-hydroxyasparagine). One can recognise a Laminin G-like 2 domain in the interval 1689-1870 (PHPQLFSGES…ALKVRVKDGC (182 aa)). Positions 1872–1907 (VDDPCTSSPCPPNSRCHDAWEDYSCVCDKGYLGINC) constitute an EGF-like 5; calcium-binding domain. Asp1889 carries the (3R)-3-hydroxyaspartate modification. The region spanning 1908–1946 (VDACHLNPCENMGACVRSPGSPQGYVCECGPSHYGPYCE) is the EGF-like 6; calcium-binding domain. In terms of domain architecture, EGF-like 7; calcium-binding spans 1947 to 1979 (NKLDLPCPRGWWGNPVCGPCHCAVSKGFDPDCN). Asn1979 carries an N-linked (GlcNAc...) asparagine glycan. Positions 1981-2016 (TNGQCQCKENYYKLLAQDTCLPCDCFPHGSHSRTCD) constitute an EGF-like 8; calcium-binding domain. 5 disulfides stabilise this stretch: Cys1985–Cys2000, Cys1987–Cys2003, Cys2005–Cys2015, Cys2024–Cys2033, and Cys2036–Cys2048. In terms of domain architecture, Laminin EGF-like spans 2003-2050 (CDCFPHGSHSRTCDMATGQCACKPGVIGRQCNRCDNPFAEVTTLGCEV). N-linked (GlcNAc...) asparagine glycosylation is found at Asn2103, Asn2122, and Asn2257. The disordered stretch occupies residues 2291 to 2328 (PEEKEGPLLRPAGRRTTPQTTRPGPGTEREAPISRRRR). The 165-residue stretch at 2297-2461 (PLLRPAGRRT…AVLMDISRRE (165 aa)) folds into the GAIN-B domain. Residues 2300–2316 (RPAGRRTTPQTTRPGPG) are compositionally biased toward low complexity. 2 cysteine pairs are disulfide-bonded: Cys2411–Cys2443 and Cys2431–Cys2445. Residues 2411–2461 (CVFWNHSLAVGGTGGWSARGCELLSRNRTHVACQCSHTASFAVLMDISRRE) form a GPS region. N-linked (GlcNAc...) asparagine glycans are attached at residues Asn2415 and Asn2437. Residues 2470–2490 (IVTYAAVSLSLAALLVAFVLL) traverse the membrane as a helical segment. The Cytoplasmic portion of the chain corresponds to 2491–2501 (SLVRMLRSNLH). The helical transmembrane segment at 2502–2522 (SIHKHLAVALFLSQLVFVIGI) threads the bilayer. N-linked (GlcNAc...) asparagine glycosylation occurs at Asn2523. Over 2523–2527 (NQTEN) the chain is Extracellular. Residues 2528–2548 (PFLCTVVAILLHYIYMSTFAW) form a helical membrane-spanning segment. Topologically, residues 2549–2572 (TLVESLHVYRMLTEVRNIDTGPMR) are cytoplasmic. A helical membrane pass occupies residues 2573–2593 (FYYVVGWGIPAIVTGLAVGLD). Over 2594-2611 (PQGYGNPDFCWLSLQDTL) the chain is Extracellular. Residues 2612 to 2632 (IWSFAGPIGAVIIINTVTSVL) traverse the membrane as a helical segment. The Cytoplasmic segment spans residues 2633–2655 (SAKVSCQRKHHYYGKKGIVSLLR). A helical membrane pass occupies residues 2656–2676 (TAFLLLLLISATWLLGLLAVN). The Extracellular portion of the chain corresponds to 2677 to 2683 (RDALSFH). A helical transmembrane segment spans residues 2684 to 2704 (YLFAIFSGLQGPFVLLFHCVL). Residues 2705 to 3014 (NQEVRKHLKG…QADGSDSEKP (310 aa)) are Cytoplasmic-facing. Ser2761 and Ser2764 each carry phosphoserine. Disordered stretches follow at residues 2777–2939 (SSGL…PPPL) and 2954–3014 (LADC…SEKP). Residues 2796–2806 (SCKDPPGHDSD) show a composition bias toward basic and acidic residues. A compositionally biased stretch (low complexity) spans 2814–2825 (DEQSSSYASSHS). A phosphoserine mark is found at Ser2871 and Ser2873. The segment covering 2876 to 2904 (PSGKPRLKVETKVSVELHREEQGSHRGEY) has biased composition (basic and acidic residues). Over residues 2960-2969 (SPTSSRTSSL) the composition is skewed to low complexity. Basic and acidic residues predominate over residues 2983–2992 (PGREPGRDHL).

Belongs to the G-protein coupled receptor 2 family. LN-TM7 subfamily. Post-translationally, the iron and 2-oxoglutarate dependent 3-hydroxylation of aspartate and asparagine is (R) stereospecific within EGF domains.

It is found in the cell membrane. Its function is as follows. Receptor that may have an important role in cell/cell signaling during nervous system formation. This Homo sapiens (Human) protein is Cadherin EGF LAG seven-pass G-type receptor 1 (CELSR1).